A 461-amino-acid chain; its full sequence is Ribonuclease inhibitor (461 aa).

Serine 2 bears the N-acetylserine mark. The segment at 2–11 (SLDIQSLDIQ) is 2 X 5 AA tandem repeats of S-L-D-I-Q. LRR repeat units lie at residues 20–48 (WAEL…CKDI), 49–76 (SSAL…VHCV), 77–105 (LQGL…CGVL), 106–133 (SSTL…LQLL), 134–162 (CEGL…CEPL), 163–190 (ASVL…VRVL), 191–219 (CQGL…CRDL), 220–247 (CGIV…MAEL), 248–276 (CPGL…CGDL), 277–304 (CRVL…ARLL), 305–333 (CETL…CSHF), 334–361 (SSVL…VREL), 362–390 (CQGL…CSSL), 391–418 (AATL…ILQL), and 419–447 (VESV…EDRL). Position 82 is a phosphothreonine (threonine 82). The residue at position 91 (serine 91) is a Phosphoserine.

In terms of assembly, forms high-affinity heterodimers with RNASE1, ANG and RNASE2. The N-terminus is blocked. Post-translationally, at least 30 of the 32 cysteine residues are in the reduced form.

The protein localises to the cytoplasm. It localises to the nucleus. In terms of biological role, ribonuclease inhibitor which inhibits RNASE1, RNASE2 and angiogenin (ANG). May play a role in redox homeostasis. Required to inhibit the cytotoxic tRNA ribonuclease activity of ANG in the cytoplasm in absence of stress. Relocates to the nucleus in response to stress, relieving inhibition of ANG in the cytoplasm, and inhibiting the angiogenic activity of ANG in the nucleus. In Homo sapiens (Human), this protein is Ribonuclease inhibitor.